A 117-amino-acid chain; its full sequence is Prefoldin subunit beta (117 aa).

It belongs to the prefoldin subunit beta family. Heterohexamer of two alpha and four beta subunits.

Its subcellular location is the cytoplasm. In terms of biological role, molecular chaperone capable of stabilizing a range of proteins. Seems to fulfill an ATP-independent, HSP70-like function in archaeal de novo protein folding. This is Prefoldin subunit beta from Methanosarcina barkeri (strain Fusaro / DSM 804).